Here is a 431-residue protein sequence, read N- to C-terminus: Leucine carboxyl methyltransferase 1 (431 aa).

Residues Arg-103, Gly-131, Asp-159, and Asp-219–Leu-220 contribute to the S-adenosyl-L-methionine site. The interval Gln-228–Gln-268 is disordered. Glu-289 lines the S-adenosyl-L-methionine pocket.

It belongs to the methyltransferase superfamily. LCMT family.

It catalyses the reaction [phosphatase 2A protein]-C-terminal L-leucine + S-adenosyl-L-methionine = [phosphatase 2A protein]-C-terminal L-leucine methyl ester + S-adenosyl-L-homocysteine. Functionally, methylates the carboxyl group of the C-terminal leucine residue of protein phosphatase 2A catalytic subunits to form alpha-leucine ester residues. In Neurospora crassa (strain ATCC 24698 / 74-OR23-1A / CBS 708.71 / DSM 1257 / FGSC 987), this protein is Leucine carboxyl methyltransferase 1 (ppm-1).